We begin with the raw amino-acid sequence, 474 residues long: TOM1-like protein 1 (474 aa).

One can recognise a VHS domain in the interval 22–154 (ATFAGVLTED…DLLKKGVQFP (133 aa)). Residues 153–180 (FPPSDGEPETRQEAGQISPNRPTSVPTA) form a disordered region. Residues 165–178 (EAGQISPNRPTSVP) show a composition bias toward polar residues. Position 170 is a phosphoserine (S170). Residues 199-287 (EQIGKLHSEL…AVLGYERFTR (89 aa)) enclose the GAT domain. A disordered region spans residues 291–317 (RLLEQKRNRTEATRTSSEPSAPSCDLL). Basic and acidic residues predominate over residues 293–302 (LEQKRNRTEA). Residues S313 and S320 each carry the phosphoserine modification. Residues 392–395 (YDNF) form an interaction with GRB2 region. Residues 420 to 424 (LPPLP) carry the SH3-binding motif. Residues 441–444 (YEVM) are interaction with PIK3R1. A Phosphotyrosine modification is found at Y457. The short motif at 457–460 (YEEI) is the SH2-binding element.

This sequence belongs to the TOM1 family. Interacts with LYN. Interacts with the SH2 and SH3 domains of FYN when phosphorylated. Also interacts with GRB2 and PIK3R1 when phosphorylated. Phosphorylated on tyrosines by LYN. Phosphorylated on tyrosines by FYN. Strongly expressed in brain and kidney, expressed at intermediate levels skin and heart, and weakly expressed in thymus. Not expressed in liver and spleen.

Its subcellular location is the golgi apparatus. The protein resides in the golgi stack. It is found in the endosome membrane. The protein localises to the cytoplasm. It localises to the membrane. Its function is as follows. Probable adapter protein involved in signaling pathways. Interacts with the SH2 and SH3 domains of various signaling proteins when it is phosphorylated. May promote FYN activation, possibly by disrupting intramolecular SH3-dependent interactions. The polypeptide is TOM1-like protein 1 (Tom1l1) (Mus musculus (Mouse)).